The chain runs to 921 residues: Phototropin-1B (921 aa).

The segment covering 1 to 11 has biased composition (gly residues); the sequence is MASKGTEGGHG. Disordered regions lie at residues 1-59 and 88-118; these read MASK…SPFL and TGLPQGVSARPSSGSARTSSEDNPQQQQSAA. The segment covering 40–51 has biased composition (low complexity); sequence SSASSFRTAAAA. Polar residues predominate over residues 97–117; it reads RPSSGSARTSSEDNPQQQQSA. One can recognise a PAS 1 domain in the interval 123-197; it reads VSEELRAALS…KIRQSLANGS (75 aa). Residues 172 to 177, R190, N205, N215, and Q236 each bind FMN; that span reads NCRFLQ. The residue at position 173 (C173) is an S-4a-FMN cysteine. Positions 197–251 constitute a PAC 1 domain; sequence SNYCGRILNYKKDGTPFWNLLTIAPIKDEDGRLLKFIGMQVEVSKYTEGKKDTVV. Polar residues predominate over residues 286-295; that stretch reads RSLSESSNNT. Disordered stretches follow at residues 286-345 and 366-391; these read RSLS…QVNR and EKNMLKPRDEDPLIDSDDERPESFED. Composition is skewed to basic and acidic residues over residues 312–321 and 366–376; these read PSKRSSESGS and EKNMLKPRDED. The 74-residue stretch at 400–473 folds into the PAS 2 domain; the sequence is RGIDLATTLE…RKIRDAIDNQ (74 aa). FMN is bound by residues 449–454, R467, N482, N492, and Q513; that span reads NCRFLQ. An S-4a-FMN cysteine modification is found at C450. The region spanning 474–528 is the PAC 2 domain; sequence AEVTVQLINYTKSGKKFWNLFHLQPMRDQKGDVQYFIGVQLDGTEHVQDDAAKEG. One can recognise a Protein kinase domain in the interval 594–881; it reads FRPVKPLGSG…ANEIKGHPFF (288 aa). ATP-binding positions include 600–608 and K623; that span reads LGSGDTGSV. The active-site Proton acceptor is the D719.

The protein belongs to the protein kinase superfamily. Ser/Thr protein kinase family. As to quaternary structure, homodimer. It depends on FMN as a cofactor. Post-translationally, autophosphorylated in response to blue light irradiation. 2 molecules of FMN bind covalently to cysteines after exposure to blue light and are reversed in the dark.

It catalyses the reaction L-seryl-[protein] + ATP = O-phospho-L-seryl-[protein] + ADP + H(+). It carries out the reaction L-threonyl-[protein] + ATP = O-phospho-L-threonyl-[protein] + ADP + H(+). In terms of biological role, protein kinase that acts as a blue light photoreceptor in a signal-transduction pathway for phototropic responses. Regulates a wide range of physiological activities in plants that maximize the efficiency of photosynthesis, such as chloroplast relocations, stomata opening, and leaf expansion. The polypeptide is Phototropin-1B (PHOT1B) (Oryza sativa subsp. japonica (Rice)).